We begin with the raw amino-acid sequence, 146 residues long: Large ribosomal subunit protein uL15 (146 aa).

The tract at residues 1 to 55 is disordered; that stretch reads MGLRLNELSPGVGAKKTAQRRGRGIGSGLGKTGGRGVKGQKSRSGSSIRSGFEGG. The span at 24-37 shows a compositional bias: gly residues; it reads GIGSGLGKTGGRGV.

Belongs to the universal ribosomal protein uL15 family. As to quaternary structure, part of the 50S ribosomal subunit.

Its function is as follows. Binds to the 23S rRNA. The chain is Large ribosomal subunit protein uL15 from Psychrobacter cryohalolentis (strain ATCC BAA-1226 / DSM 17306 / VKM B-2378 / K5).